A 103-amino-acid polypeptide reads, in one-letter code: Glutaredoxin-C11 (103 aa).

One can recognise a Glutaredoxin domain in the interval 1–102 (MERIRDLSSK…QMLKDAKAIW (102 aa)). Cys-21 and Cys-24 form a disulfide bridge.

It belongs to the glutaredoxin family. CC-type subfamily.

It localises to the cytoplasm. Its function is as follows. Has a glutathione-disulfide oxidoreductase activity in the presence of NADPH and glutathione reductase. Reduces low molecular weight disulfides and proteins. This is Glutaredoxin-C11 (GRXC11) from Arabidopsis thaliana (Mouse-ear cress).